We begin with the raw amino-acid sequence, 624 residues long: MAKVIQLSDELSNKIAAGEVVERPASVVKELVENAIDANSTVIEIDIEEAGLSSIRVLDNGEGMETDDCKRAFRRHATSKIKDENDLFRVRTLGFRGEALPSIASVSHLEIKTSIGEGAGTHLILQGGNIISEQKSSSRKGTEIIVTNLFFNTPARLKYMKTVHTELGNITDVVNRIALAHPEVSIRLRHQGKNLLQTNGNGDVRHVLAAIYGTAVAKKMIPLHISSLDFEVKGYIALPEITRASRNYMSSVINGRYIKNFPLVKAVHEGYHTLLPIGRHPITFIEITMDPILVDVNVHPSKLEVRLSKETELHELIRDGIKEVFQKQRLIPSAQLPKKSAPAPAKNEQQFMTFEESAPERKLPEKTPEPSYSPMKLSSVVKEPEPVIIEEEILPNEADHGVPPELGMPETAAPVSDTPEPEAVSEEIREERVPMMYPIGQMHGTYILAQNENGLYIIDQHAAQERIKYEYFREKVGQVEPEVQDMIVPLTFHYAANEALIIDQHQHELESVGVFLEAFGTNSYIVRCHPAWFPKGEEAELIEEIIQQVLDAKQIDIKKLREEAAIMMSCKGSIKANRHLRNDEIKALLDDLRRTTDPFTCPHGRPIIIHHSTYEMEKMFKRVM.

Residues 355–377 are disordered; the sequence is EESAPERKLPEKTPEPSYSPMKL. Basic and acidic residues predominate over residues 358–368; it reads APERKLPEKTP.

It belongs to the DNA mismatch repair MutL/HexB family.

Its function is as follows. This protein is involved in the repair of mismatches in DNA. It is required for dam-dependent methyl-directed DNA mismatch repair. May act as a 'molecular matchmaker', a protein that promotes the formation of a stable complex between two or more DNA-binding proteins in an ATP-dependent manner without itself being part of a final effector complex. In Bacillus velezensis (strain DSM 23117 / BGSC 10A6 / LMG 26770 / FZB42) (Bacillus amyloliquefaciens subsp. plantarum), this protein is DNA mismatch repair protein MutL.